Here is a 107-residue protein sequence, read N- to C-terminus: Nucleoid-associated protein HNE_0371 (107 aa).

Belongs to the YbaB/EbfC family. Homodimer.

It is found in the cytoplasm. The protein localises to the nucleoid. Its function is as follows. Binds to DNA and alters its conformation. May be involved in regulation of gene expression, nucleoid organization and DNA protection. This chain is Nucleoid-associated protein HNE_0371, found in Hyphomonas neptunium (strain ATCC 15444).